Consider the following 433-residue polypeptide: Phosphoribosylamine--glycine ligase (433 aa).

In terms of domain architecture, ATP-grasp spans 110–317 (RNFMKKYGIE…FVDIMSAVVK (208 aa)). Residue 137–194 (IEKLGDVAVKPSGLTGGKGVKVMGDQLPDLKAAKAYTSELLEKGSVVIEERFIGEEFT) participates in ATP binding. Residues Gln275, Glu287, and Asn289 each contribute to the Mg(2+) site. Residues Gln275, Glu287, and Asn289 each contribute to the Mn(2+) site.

Belongs to the GARS family. The cofactor is Mg(2+). Requires Mn(2+) as cofactor.

The catalysed reaction is 5-phospho-beta-D-ribosylamine + glycine + ATP = N(1)-(5-phospho-beta-D-ribosyl)glycinamide + ADP + phosphate + H(+). It participates in purine metabolism; IMP biosynthesis via de novo pathway; N(1)-(5-phospho-D-ribosyl)glycinamide from 5-phospho-alpha-D-ribose 1-diphosphate: step 2/2. The chain is Phosphoribosylamine--glycine ligase from Methanosarcina barkeri (strain Fusaro / DSM 804).